A 231-amino-acid polypeptide reads, in one-letter code: Phosphoglycolate phosphatase (231 aa).

Asp9 serves as the catalytic Nucleophile. Positions 9 and 11 each coordinate Mg(2+). Lys154 lines the substrate pocket. The Mg(2+) site is built by Asp177 and Asp181.

This sequence belongs to the archaeal SPP-like hydrolase family. Requires Mg(2+) as cofactor.

It carries out the reaction 2-phosphoglycolate + H2O = glycolate + phosphate. Functionally, catalyzes the dephosphorylation of 2-phosphoglycolate. In Pyrococcus furiosus (strain ATCC 43587 / DSM 3638 / JCM 8422 / Vc1), this protein is Phosphoglycolate phosphatase.